Here is a 359-residue protein sequence, read N- to C-terminus: Serine/threonine-protein phosphatase 2A activator 2 (359 aa).

This sequence belongs to the PTPA-type PPIase family.

The protein resides in the cytoplasm. The catalysed reaction is [protein]-peptidylproline (omega=180) = [protein]-peptidylproline (omega=0). Functionally, PPIases accelerate the folding of proteins. It catalyzes the cis-trans isomerization of proline imidic peptide bonds in oligopeptides. Acts as a regulatory subunit for PP2A-like phosphatases modulating their activity or substrate specificity, probably by inducing a conformational change in the catalytic subunit, a direct target of the PPIase. Can reactivate inactive phosphatase PP2A-phosphatase methylesterase complexes (PP2Ai) in presence of ATP and Mg(2+) by dissociating the inactive form from the complex. This is Serine/threonine-protein phosphatase 2A activator 2 (RRD2) from Eremothecium gossypii (strain ATCC 10895 / CBS 109.51 / FGSC 9923 / NRRL Y-1056) (Yeast).